The primary structure comprises 475 residues: Protein nucleotidyltransferase YdiU (475 aa).

The ATP site is built by Gly82, Gly84, Arg85, Lys105, Asp117, Gly118, Arg168, and Arg175. The active-site Proton acceptor is the Asp240. Mg(2+) contacts are provided by Asn241 and Asp250. Asp250 is an ATP binding site.

The protein belongs to the SELO family. Mg(2+) serves as cofactor. Mn(2+) is required as a cofactor.

It catalyses the reaction L-seryl-[protein] + ATP = 3-O-(5'-adenylyl)-L-seryl-[protein] + diphosphate. The catalysed reaction is L-threonyl-[protein] + ATP = 3-O-(5'-adenylyl)-L-threonyl-[protein] + diphosphate. The enzyme catalyses L-tyrosyl-[protein] + ATP = O-(5'-adenylyl)-L-tyrosyl-[protein] + diphosphate. It carries out the reaction L-histidyl-[protein] + UTP = N(tele)-(5'-uridylyl)-L-histidyl-[protein] + diphosphate. It catalyses the reaction L-seryl-[protein] + UTP = O-(5'-uridylyl)-L-seryl-[protein] + diphosphate. The catalysed reaction is L-tyrosyl-[protein] + UTP = O-(5'-uridylyl)-L-tyrosyl-[protein] + diphosphate. Its function is as follows. Nucleotidyltransferase involved in the post-translational modification of proteins. It can catalyze the addition of adenosine monophosphate (AMP) or uridine monophosphate (UMP) to a protein, resulting in modifications known as AMPylation and UMPylation. The polypeptide is Protein nucleotidyltransferase YdiU (Aeromonas hydrophila subsp. hydrophila (strain ATCC 7966 / DSM 30187 / BCRC 13018 / CCUG 14551 / JCM 1027 / KCTC 2358 / NCIMB 9240 / NCTC 8049)).